A 236-amino-acid polypeptide reads, in one-letter code: Cysteine-rich venom protein TRI1 (236 aa).

A signal peptide spans 1 to 18; that stretch reads MIVFILLSLAAVLEQSFG. In terms of domain architecture, SCP spans 37-165; the sequence is VDRHNSFRRS…GYSYFYVCQY (129 aa). Disulfide bonds link cysteine 74–cysteine 152, cysteine 91–cysteine 166, cysteine 147–cysteine 163, cysteine 185–cysteine 192, cysteine 188–cysteine 197, cysteine 201–cysteine 234, cysteine 210–cysteine 228, and cysteine 219–cysteine 232. The ShKT domain occupies 201 to 234; it reads CLREDKFTNCKSLVQQNSCQHDWTRKNCPATCFC.

This sequence belongs to the CRISP family. Expressed by the venom gland.

The protein resides in the secreted. Its function is as follows. Blocks contraction of smooth muscle elicited by high potassium-induced depolarization, but does not block caffeine-stimulated contraction. May target voltage-gated calcium channels on smooth muscle. The chain is Cysteine-rich venom protein TRI1 from Trimorphodon biscutatus (Western lyre snake).